A 321-amino-acid polypeptide reads, in one-letter code: Lipoyl synthase (321 aa).

Cysteine 68, cysteine 73, cysteine 79, cysteine 94, cysteine 98, cysteine 101, and serine 308 together coordinate [4Fe-4S] cluster. The 218-residue stretch at phenylalanine 80–threonine 297 folds into the Radical SAM core domain.

This sequence belongs to the radical SAM superfamily. Lipoyl synthase family. [4Fe-4S] cluster serves as cofactor.

The protein localises to the cytoplasm. It catalyses the reaction [[Fe-S] cluster scaffold protein carrying a second [4Fe-4S](2+) cluster] + N(6)-octanoyl-L-lysyl-[protein] + 2 oxidized [2Fe-2S]-[ferredoxin] + 2 S-adenosyl-L-methionine + 4 H(+) = [[Fe-S] cluster scaffold protein] + N(6)-[(R)-dihydrolipoyl]-L-lysyl-[protein] + 4 Fe(3+) + 2 hydrogen sulfide + 2 5'-deoxyadenosine + 2 L-methionine + 2 reduced [2Fe-2S]-[ferredoxin]. It functions in the pathway protein modification; protein lipoylation via endogenous pathway; protein N(6)-(lipoyl)lysine from octanoyl-[acyl-carrier-protein]: step 2/2. In terms of biological role, catalyzes the radical-mediated insertion of two sulfur atoms into the C-6 and C-8 positions of the octanoyl moiety bound to the lipoyl domains of lipoate-dependent enzymes, thereby converting the octanoylated domains into lipoylated derivatives. This chain is Lipoyl synthase, found in Tolumonas auensis (strain DSM 9187 / NBRC 110442 / TA 4).